Here is a 493-residue protein sequence, read N- to C-terminus: Cardiolipin synthase 1 (493 aa).

The next 2 membrane-spanning stretches (helical) occupy residues 13–33 (FTII…IIIF) and 45–65 (WAWL…YLFF). PLD phosphodiesterase domains follow at residues 228-255 (MNNR…GDEY) and 406-433 (ENGF…DFRS). Catalysis depends on residues H233, K235, D240, H411, K413, and D418.

This sequence belongs to the phospholipase D family. Cardiolipin synthase subfamily.

The protein resides in the cell membrane. The catalysed reaction is 2 a 1,2-diacyl-sn-glycero-3-phospho-(1'-sn-glycerol) = a cardiolipin + glycerol. Catalyzes the reversible phosphatidyl group transfer from one phosphatidylglycerol molecule to another to form cardiolipin (CL) (diphosphatidylglycerol) and glycerol. This chain is Cardiolipin synthase 1 (cls1), found in Staphylococcus aureus (strain MRSA252).